The sequence spans 311 residues: MKPTTIFLMGPTASGKTDLAIQLRSSLPVEVISVDSALIYKGMDIGTAKPSKEELALAPHRLIDILDPSESYSAMNFRDDALREMADITAQGKIPLLVGGTMLYYKALIEGLSPLPSADENIRAELEQKAAQQGWAALHTELAKIDPMSAARINPSDSQRINRALEVFYITGKSLTELTEEKGEALPYDFVQFAIAPQDRHVLHERIEQRFHKMIELGFQEEVEKLYTRGDLNINLPSIRCVGYRQMWEYLQGDYDHEEMIFRGICATRQLAKRQLTWLRGWKTPIQWLDSLQPQQAKETVLRHLDSYQKG.

10 to 17 (GPTASGKT) is an ATP binding site. 12–17 (TASGKT) provides a ligand contact to substrate. 3 interaction with substrate tRNA regions span residues 35–38 (DSAL), 159–163 (QRINR), and 240–245 (RCVGYR).

The protein belongs to the IPP transferase family. In terms of assembly, monomer. Mg(2+) serves as cofactor.

It carries out the reaction adenosine(37) in tRNA + dimethylallyl diphosphate = N(6)-dimethylallyladenosine(37) in tRNA + diphosphate. Its function is as follows. Catalyzes the transfer of a dimethylallyl group onto the adenine at position 37 in tRNAs that read codons beginning with uridine, leading to the formation of N6-(dimethylallyl)adenosine (i(6)A). The protein is tRNA dimethylallyltransferase of Haemophilus influenzae (strain PittEE).